We begin with the raw amino-acid sequence, 485 residues long: Glutamyl-tRNA(Gln) amidotransferase subunit A (485 aa).

Catalysis depends on charge relay system residues Lys-79 and Ser-154. The Acyl-ester intermediate role is filled by Ser-178.

The protein belongs to the amidase family. GatA subfamily. In terms of assembly, heterotrimer of A, B and C subunits.

The enzyme catalyses L-glutamyl-tRNA(Gln) + L-glutamine + ATP + H2O = L-glutaminyl-tRNA(Gln) + L-glutamate + ADP + phosphate + H(+). In terms of biological role, allows the formation of correctly charged Gln-tRNA(Gln) through the transamidation of misacylated Glu-tRNA(Gln) in organisms which lack glutaminyl-tRNA synthetase. The reaction takes place in the presence of glutamine and ATP through an activated gamma-phospho-Glu-tRNA(Gln). The protein is Glutamyl-tRNA(Gln) amidotransferase subunit A of Carboxydothermus hydrogenoformans (strain ATCC BAA-161 / DSM 6008 / Z-2901).